The chain runs to 182 residues: Isopentenyl-diphosphate Delta-isomerase (182 aa).

Residues histidine 25 and histidine 32 each coordinate Mn(2+). The 135-residue stretch at 30 to 164 (LLHLAFSSWL…PWAFSPWMVM (135 aa)) folds into the Nudix hydrolase domain. Cysteine 67 is an active-site residue. Position 69 (histidine 69) interacts with Mn(2+). Glutamate 87 lines the Mg(2+) pocket. Residues glutamate 114 and glutamate 116 each contribute to the Mn(2+) site. Residue glutamate 116 is part of the active site.

It belongs to the IPP isomerase type 1 family. Homodimer. The cofactor is Mg(2+). Requires Mn(2+) as cofactor.

Its subcellular location is the cytoplasm. It carries out the reaction isopentenyl diphosphate = dimethylallyl diphosphate. It participates in isoprenoid biosynthesis; dimethylallyl diphosphate biosynthesis; dimethylallyl diphosphate from isopentenyl diphosphate: step 1/1. Its function is as follows. Catalyzes the 1,3-allylic rearrangement of the homoallylic substrate isopentenyl (IPP) to its highly electrophilic allylic isomer, dimethylallyl diphosphate (DMAPP). The sequence is that of Isopentenyl-diphosphate Delta-isomerase from Shigella boydii serotype 18 (strain CDC 3083-94 / BS512).